The sequence spans 265 residues: Mlc titration factor A (265 aa).

Zn(2+) contacts are provided by histidine 111, histidine 148, histidine 152, and glutamate 211.

This sequence belongs to the MtfA family. Interacts with Mlc. Zn(2+) is required as a cofactor.

The protein localises to the cytoplasm. In terms of biological role, involved in the modulation of the activity of the glucose-phosphotransferase system (glucose-PTS). Interacts with the transcriptional repressor Mlc, preventing its interaction with DNA and leading to the modulation of expression of genes regulated by Mlc, including ptsG, which encodes the PTS system glucose-specific EIICB component. Shows zinc-dependent metallopeptidase activity. The protein is Mlc titration factor A of Salmonella schwarzengrund (strain CVM19633).